The sequence spans 207 residues: Small ribosomal subunit protein uS2 (207 aa).

Belongs to the universal ribosomal protein uS2 family.

This is Small ribosomal subunit protein uS2 from Methanocella arvoryzae (strain DSM 22066 / NBRC 105507 / MRE50).